A 352-amino-acid chain; its full sequence is Phosphoribosylformylglycinamidine cyclo-ligase (352 aa).

The protein belongs to the AIR synthase family.

Its subcellular location is the cytoplasm. It carries out the reaction 2-formamido-N(1)-(5-O-phospho-beta-D-ribosyl)acetamidine + ATP = 5-amino-1-(5-phospho-beta-D-ribosyl)imidazole + ADP + phosphate + H(+). The protein operates within purine metabolism; IMP biosynthesis via de novo pathway; 5-amino-1-(5-phospho-D-ribosyl)imidazole from N(2)-formyl-N(1)-(5-phospho-D-ribosyl)glycinamide: step 2/2. In Pseudomonas putida (strain GB-1), this protein is Phosphoribosylformylglycinamidine cyclo-ligase.